Here is a 215-residue protein sequence, read N- to C-terminus: Probable phosphoglycerate mutase GpmB (215 aa).

Residues 8–15 (RHGETQWN), 21–22 (QG), Arg-58, Lys-60, 82–85 (ELDM), 104–105 (RR), and 151–152 (GI) contribute to the substrate site. The Tele-phosphohistidine intermediate role is filled by His-9. Glu-82 functions as the Proton donor/acceptor in the catalytic mechanism.

The protein belongs to the phosphoglycerate mutase family. GpmB subfamily.

The enzyme catalyses (2R)-2-phosphoglycerate = (2R)-3-phosphoglycerate. It functions in the pathway carbohydrate degradation; glycolysis; pyruvate from D-glyceraldehyde 3-phosphate: step 3/5. This Salmonella choleraesuis (strain SC-B67) protein is Probable phosphoglycerate mutase GpmB.